The primary structure comprises 306 residues: Curved DNA-binding protein (306 aa).

Positions 5–69 (DYYAIMGVKP…QRRAEYDQMW (65 aa)) constitute a J domain.

It localises to the cytoplasm. The protein localises to the nucleoid. In terms of biological role, DNA-binding protein that preferentially recognizes a curved DNA sequence. It is probably a functional analog of DnaJ; displays overlapping activities with DnaJ, but functions under different conditions, probably acting as a molecular chaperone in an adaptive response to environmental stresses other than heat shock. Lacks autonomous chaperone activity; binds native substrates and targets them for recognition by DnaK. Its activity is inhibited by the binding of CbpM. The polypeptide is Curved DNA-binding protein (Escherichia coli O157:H7).